The sequence spans 65 residues: DNA gyrase inhibitor YacG (65 aa).

The Zn(2+) site is built by cysteine 9, cysteine 12, cysteine 28, and cysteine 32. The disordered stretch occupies residues lysine 45 to glutamine 65. A compositionally biased stretch (acidic residues) spans serine 54–glutamine 65.

The protein belongs to the DNA gyrase inhibitor YacG family. As to quaternary structure, interacts with GyrB. Requires Zn(2+) as cofactor.

Its function is as follows. Inhibits all the catalytic activities of DNA gyrase by preventing its interaction with DNA. Acts by binding directly to the C-terminal domain of GyrB, which probably disrupts DNA binding by the gyrase. This is DNA gyrase inhibitor YacG from Shigella boydii serotype 18 (strain CDC 3083-94 / BS512).